Consider the following 65-residue polypeptide: Gallinacin-1 (65 aa).

The first 19 residues, 1–19 (MRIVYLLLPFILLLAQGAA), serve as a signal peptide directing secretion. The propeptide occupies 20 to 25 (GSSQAL). 3 cysteine pairs are disulfide-bonded: C31-C59, C38-C53, and C43-C60.

The protein belongs to the beta-defensin family. Strong expression in the bone marrow, lung, testis. Moderate expression in the bursa and intestine. Low expression in the cloaca, gall bladder, brain and pancreas. Expressed in the vagina, ovarian stroma and the theca and granulosa layers of the ovarian follicle.

It localises to the secreted. Its subcellular location is the cytoplasmic granule. In terms of biological role, has bactericidal activity. Potent activity against E.coli ML-35, L.monocytogenes EGD and C.albicans. This is Gallinacin-1 (GAL1) from Gallus gallus (Chicken).